Consider the following 542-residue polypeptide: Phosphoglucomutase (542 aa).

Residues threonine 17, arginine 21, 112-113, and lysine 125 each bind substrate; that span reads SH. The active-site Phosphoserine intermediate is serine 112. Serine 112 lines the Mg(2+) pocket. Mg(2+) contacts are provided by aspartate 276, aspartate 278, and aspartate 280. Residues 280–281, threonine 343, 362–364, lysine 375, and arginine 495 each bind substrate; these read DR and EES.

It belongs to the phosphohexose mutase family. The cofactor is Mg(2+).

The catalysed reaction is alpha-D-glucose 1-phosphate = alpha-D-glucose 6-phosphate. Its function is as follows. This enzyme participates in both the breakdown and synthesis of glucose. Required for the synthesis of capsular polysaccharide and normal lipopolysaccharide. The chain is Phosphoglucomutase (pgm) from Rhizobium radiobacter (Agrobacterium tumefaciens).